Here is a 102-residue protein sequence, read N- to C-terminus: Small ribosomal subunit protein eS24 (102 aa).

This sequence belongs to the eukaryotic ribosomal protein eS24 family.

The chain is Small ribosomal subunit protein eS24 from Methanococcus maripaludis (strain C5 / ATCC BAA-1333).